A 378-amino-acid polypeptide reads, in one-letter code: Cytochrome b (378 aa).

4 helical membrane-spanning segments follow: residues 34–54, 78–99, 114–134, and 179–199; these read FGSLLGLCLIIQILTGLFLAM, WFLRICHANGASFFFACLFIHV, WMIGVIILFMVMATGFLGYVL, and FFTFHFILPFIVLALTMIHLL. Residues His-84 and His-98 each contribute to the heme b site. Heme b contacts are provided by His-183 and His-197. His-202 contributes to the a ubiquinone binding site. 4 helical membrane-spanning segments follow: residues 227-247, 289-309, 321-341, and 348-368; these read YKDIVGFIIFMWILIGFIWKF, LGGVIALVLSIAILMILPFTH, LNQILFWNMVIVASLLTWIGA, and YVLTGQILTVLYFSYFIINPL.

This sequence belongs to the cytochrome b family. The main subunits of complex b-c1 are: cytochrome b, cytochrome c1 and the Rieske protein. It depends on heme b as a cofactor.

It localises to the mitochondrion inner membrane. In terms of biological role, component of the ubiquinol-cytochrome c reductase complex (complex III or cytochrome b-c1 complex) that is part of the mitochondrial respiratory chain. The b-c1 complex mediates electron transfer from ubiquinol to cytochrome c. Contributes to the generation of a proton gradient across the mitochondrial membrane that is then used for ATP synthesis. The protein is Cytochrome b of Aedes aegypti (Yellowfever mosquito).